Consider the following 234-residue polypeptide: NLP effector protein 1 (234 aa).

The N-terminal stretch at 1–18 is a signal peptide; sequence MQLRAFISVFASLACVNA. N-linked (GlcNAc...) asparagine glycosylation is present at asparagine 66. The Conserved undecapeptide motif I signature appears at 102-112; the sequence is AFMYSWYMPKD. Positions 119 to 125 match the Hepta-peptide GHRHDWE motif II motif; that stretch reads GHRHDWE.

Belongs to the Necrosis inducing protein (NPP1) family.

It localises to the secreted. Secreted effector that contributes to virulence during infection by P.capsici. Induces distinct chlorosis at 3 days after inoculation of host C.annuum leaves, and all the chlorotic areas gradually turn brown and become moderately necrotic at 7 days after inoculation. Leads only to chlorotic areas, without necrosis at 7 days after non-host N.benthamiana leaves infection. Induces cell death in hot pepper. In Phytophthora capsici, this protein is NLP effector protein 1.